We begin with the raw amino-acid sequence, 374 residues long: F-box/LRR-repeat protein 8 (374 aa).

One can recognise an F-box domain in the interval 2-48 (AEPGEQLPEEVLALIFRHLPLPDRAAAARVCRAWAAAATCSAVWHDT).

In terms of assembly, directly interacts with SKP1 and CUL1.

Its function is as follows. Substrate-recognition component of the SCF (SKP1-CUL1-F-box protein)-type E3 ubiquitin ligase complex. The protein is F-box/LRR-repeat protein 8 (FBXL8) of Bos taurus (Bovine).